Reading from the N-terminus, the 294-residue chain is MGLGLVDCHCHLSASDFDNDLDDVLEKARKANVMALVAVAEHAGEFERIMQLSERYNGFVLPCLGVHPVQELSPEKPRSVTLKDLDVALPIIEKYKDRLLAIGEVGLDFTPRYAGTDEEKEEQRQVLIRQVQLAKRLNVPLNVHSRSAGRPTISLLREQGAEQVLLHAFDGRPSVAMEGVRAGYYFSIPPSIVRSGQKQKLVKQLPLSSICLETDSPALGPEKLTRNEPCNISIAAEFIAQVKGISVEEVREVTTRNAFRLFPKLQSLLQKELQSHPLQAKSAQGSAGESKGLL.

Residues histidine 9, histidine 11, glutamate 104, histidine 144, histidine 167, and aspartate 215 each contribute to the Zn(2+) site.

It belongs to the metallo-dependent hydrolases superfamily. TatD-type hydrolase family. Mn(2+) is required as a cofactor. Ca(2+) serves as cofactor. It depends on Mg(2+) as a cofactor. Requires Zn(2+) as cofactor.

It is found in the nucleus. Its activity is regulated as follows. The 3'-exonuclease activity is sensitive to the metal ion present in the active site, whereas the AP endodeoxyribonuclease activity is observed in a variety of divalent metal cofactors. 3'-exoxonuclease activity is suppressed in the presence of Ca(2+), Zn(2+) and Ni(2+). Functionally, exhibits 3'-exonuclease activities and apurinic/apyrimidinic (AP) endonuclease (in vitro). Show preferential AP endonuclease activity on double-stranded DNA substrates and 3'- exonuclease activity on single-stranded DNA. The sequence is that of Putative deoxyribonuclease TATDN3 (Tatdn3) from Mus musculus (Mouse).